The sequence spans 525 residues: Bifunctional purine biosynthesis protein PurH (525 aa).

Positions 10-156 constitute an MGS-like domain; that stretch reads HRIPIRRALV…KNHPSVAIVT (147 aa).

The protein belongs to the PurH family.

It catalyses the reaction (6R)-10-formyltetrahydrofolate + 5-amino-1-(5-phospho-beta-D-ribosyl)imidazole-4-carboxamide = 5-formamido-1-(5-phospho-D-ribosyl)imidazole-4-carboxamide + (6S)-5,6,7,8-tetrahydrofolate. The enzyme catalyses IMP + H2O = 5-formamido-1-(5-phospho-D-ribosyl)imidazole-4-carboxamide. It participates in purine metabolism; IMP biosynthesis via de novo pathway; 5-formamido-1-(5-phospho-D-ribosyl)imidazole-4-carboxamide from 5-amino-1-(5-phospho-D-ribosyl)imidazole-4-carboxamide (10-formyl THF route): step 1/1. It functions in the pathway purine metabolism; IMP biosynthesis via de novo pathway; IMP from 5-formamido-1-(5-phospho-D-ribosyl)imidazole-4-carboxamide: step 1/1. The sequence is that of Bifunctional purine biosynthesis protein PurH from Nocardioides sp. (strain ATCC BAA-499 / JS614).